Consider the following 240-residue polypeptide: LexA repressor (240 aa).

Residues 26–46 (FDEMKDALDLASKSGIHRLIT) constitute a DNA-binding region (H-T-H motif). Active-site for autocatalytic cleavage activity residues include Ser-160 and Lys-198.

It belongs to the peptidase S24 family. In terms of assembly, homodimer.

It catalyses the reaction Hydrolysis of Ala-|-Gly bond in repressor LexA.. In terms of biological role, represses a number of genes involved in the response to DNA damage (SOS response), including recA and lexA. In the presence of single-stranded DNA, RecA interacts with LexA causing an autocatalytic cleavage which disrupts the DNA-binding part of LexA, leading to derepression of the SOS regulon and eventually DNA repair. The protein is LexA repressor of Agrobacterium fabrum (strain C58 / ATCC 33970) (Agrobacterium tumefaciens (strain C58)).